We begin with the raw amino-acid sequence, 280 residues long: Large ribosomal subunit protein uL2 (280 aa).

2 disordered regions span residues 29-58 (PEKS…GGGH) and 225-280 (VMNP…NKKR). The span at 45 to 58 (SHGHITTRHRGGGH) shows a compositional bias: basic residues. Basic and acidic residues predominate over residues 253–269 (KEGRTRKPKRYSDDMIV). The span at 270–280 (RRRRANKNKKR) shows a compositional bias: basic residues.

This sequence belongs to the universal ribosomal protein uL2 family. Part of the 50S ribosomal subunit. Forms a bridge to the 30S subunit in the 70S ribosome.

In terms of biological role, one of the primary rRNA binding proteins. Required for association of the 30S and 50S subunits to form the 70S ribosome, for tRNA binding and peptide bond formation. It has been suggested to have peptidyltransferase activity; this is somewhat controversial. Makes several contacts with the 16S rRNA in the 70S ribosome. This is Large ribosomal subunit protein uL2 from Corynebacterium glutamicum (strain R).